The following is a 327-amino-acid chain: Embigin (327 aa).

An N-terminal signal peptide occupies residues 1 to 32 (MRALPGLLEARARTPRLLLLQCLLAAARPSSA). Residues 33–260 (DGSAPDSPFT…ELVVLSYLVP (228 aa)) lie on the Extracellular side of the membrane. Residues N54, N61, N75, N85, N100, N189, N196, N213, and N218 are each glycosylated (N-linked (GlcNAc...) asparagine). Ig-like V-type domains are found at residues 71-158 (PVEK…NFKV) and 159-253 (PELH…IELV). 2 cysteine pairs are disulfide-bonded: C88/C142 and C180/C237. A helical membrane pass occupies residues 261 to 281 (LKPFLVIVAEVILLVATILLC). At 282–327 (EKYTQKKKKHSDEGKEFEQIEQLKSDDSNGIENNVPRHRKNESLGQ) the chain is on the cytoplasmic side. The tract at residues 287–327 (KKKKHSDEGKEFEQIEQLKSDDSNGIENNVPRHRKNESLGQ) is disordered. Basic and acidic residues predominate over residues 291–308 (HSDEGKEFEQIEQLKSDD). S309 carries the post-translational modification Phosphoserine.

Interacts with SLC16A1, SLC16A6 and SLC16A7.

It localises to the cell membrane. The protein resides in the synapse. Its function is as follows. Plays a role in the outgrowth of motoneurons and in the formation of neuromuscular junctions. Following muscle denervation, promotes nerve terminal sprouting and the formation of additional acetylcholine receptor clusters at synaptic sites without affecting terminal Schwann cell number or morphology. Delays the retraction of terminal sprouts following re-innervation of denervated endplates. May play a role in targeting the monocarboxylate transporters SLC16A1, SLC16A6 and SLC16A7 to the cell membrane. This chain is Embigin (EMB), found in Homo sapiens (Human).